A 294-amino-acid polypeptide reads, in one-letter code: Cyclin-G1 (294 aa).

This sequence belongs to the cyclin family. Cyclin G subfamily.

The protein localises to the nucleus. In terms of biological role, may play a role in growth regulation. Is associated with G2/M phase arrest in response to DNA damage. May be an intermediate by which p53 mediates its role as an inhibitor of cellular proliferation. This is Cyclin-G1 (Ccng1) from Rattus norvegicus (Rat).